The primary structure comprises 96 residues: Co-chaperonin GroES (96 aa).

It belongs to the GroES chaperonin family. Heptamer of 7 subunits arranged in a ring. Interacts with the chaperonin GroEL.

The protein localises to the cytoplasm. Its function is as follows. Together with the chaperonin GroEL, plays an essential role in assisting protein folding. The GroEL-GroES system forms a nano-cage that allows encapsulation of the non-native substrate proteins and provides a physical environment optimized to promote and accelerate protein folding. GroES binds to the apical surface of the GroEL ring, thereby capping the opening of the GroEL channel. The polypeptide is Co-chaperonin GroES (Caulobacter sp. (strain K31)).